We begin with the raw amino-acid sequence, 141 residues long: Large ribosomal subunit protein uL11 (141 aa).

This sequence belongs to the universal ribosomal protein uL11 family. In terms of assembly, part of the ribosomal stalk of the 50S ribosomal subunit. Interacts with L10 and the large rRNA to form the base of the stalk. L10 forms an elongated spine to which L12 dimers bind in a sequential fashion forming a multimeric L10(L12)X complex. In terms of processing, one or more lysine residues are methylated.

In terms of biological role, forms part of the ribosomal stalk which helps the ribosome interact with GTP-bound translation factors. This is Large ribosomal subunit protein uL11 from Chlamydia abortus (strain DSM 27085 / S26/3) (Chlamydophila abortus).